The following is a 113-amino-acid chain: Large ribosomal subunit protein uL22 (113 aa).

The protein belongs to the universal ribosomal protein uL22 family. As to quaternary structure, part of the 50S ribosomal subunit.

This protein binds specifically to 23S rRNA; its binding is stimulated by other ribosomal proteins, e.g. L4, L17, and L20. It is important during the early stages of 50S assembly. It makes multiple contacts with different domains of the 23S rRNA in the assembled 50S subunit and ribosome. Its function is as follows. The globular domain of the protein is located near the polypeptide exit tunnel on the outside of the subunit, while an extended beta-hairpin is found that lines the wall of the exit tunnel in the center of the 70S ribosome. The sequence is that of Large ribosomal subunit protein uL22 from Thermus thermophilus (strain ATCC BAA-163 / DSM 7039 / HB27).